A 286-amino-acid chain; its full sequence is Pantothenate synthetase (286 aa).

30 to 37 (MGNLHAGH) serves as a coordination point for ATP. The active-site Proton donor is the histidine 37. Glutamine 61 serves as a coordination point for (R)-pantoate. Residue glutamine 61 participates in beta-alanine binding. ATP is bound at residue 149-152 (GEKD). A (R)-pantoate-binding site is contributed by glutamine 155. Residues valine 178 and 186–189 (MSSR) contribute to the ATP site.

It belongs to the pantothenate synthetase family. In terms of assembly, homodimer.

The protein resides in the cytoplasm. The catalysed reaction is (R)-pantoate + beta-alanine + ATP = (R)-pantothenate + AMP + diphosphate + H(+). The protein operates within cofactor biosynthesis; (R)-pantothenate biosynthesis; (R)-pantothenate from (R)-pantoate and beta-alanine: step 1/1. Its function is as follows. Catalyzes the condensation of pantoate with beta-alanine in an ATP-dependent reaction via a pantoyl-adenylate intermediate. This chain is Pantothenate synthetase, found in Methylococcus capsulatus (strain ATCC 33009 / NCIMB 11132 / Bath).